We begin with the raw amino-acid sequence, 651 residues long: DNA ligase (651 aa).

NAD(+) is bound by residues 32-36 (DAEYD), 75-76 (SL), and E106. K108 functions as the N6-AMP-lysine intermediate in the catalytic mechanism. NAD(+)-binding residues include R129, E164, K271, and K295. 4 residues coordinate Zn(2+): C389, C392, C405, and C411. Residues 575 to 651 (SSDSFLNNKI…LDEEQWNRLC (77 aa)) form the BRCT domain.

The protein belongs to the NAD-dependent DNA ligase family. LigA subfamily. Requires Mg(2+) as cofactor. The cofactor is Mn(2+).

It carries out the reaction NAD(+) + (deoxyribonucleotide)n-3'-hydroxyl + 5'-phospho-(deoxyribonucleotide)m = (deoxyribonucleotide)n+m + AMP + beta-nicotinamide D-nucleotide.. Its function is as follows. DNA ligase that catalyzes the formation of phosphodiester linkages between 5'-phosphoryl and 3'-hydroxyl groups in double-stranded DNA using NAD as a coenzyme and as the energy source for the reaction. It is essential for DNA replication and repair of damaged DNA. The sequence is that of DNA ligase from Wolbachia pipientis subsp. Culex pipiens (strain wPip).